Here is a 507-residue protein sequence, read N- to C-terminus: ATP synthase subunit alpha, chloroplastic (507 aa).

170–177 (GDRQTGKT) is a binding site for ATP.

Belongs to the ATPase alpha/beta chains family. As to quaternary structure, F-type ATPases have 2 components, CF(1) - the catalytic core - and CF(0) - the membrane proton channel. CF(1) has five subunits: alpha(3), beta(3), gamma(1), delta(1), epsilon(1). CF(0) has four main subunits: a, b, b' and c.

It is found in the plastid. Its subcellular location is the chloroplast thylakoid membrane. The enzyme catalyses ATP + H2O + 4 H(+)(in) = ADP + phosphate + 5 H(+)(out). Produces ATP from ADP in the presence of a proton gradient across the membrane. The alpha chain is a regulatory subunit. In Cycas taitungensis (Prince sago), this protein is ATP synthase subunit alpha, chloroplastic.